The primary structure comprises 678 residues: PTS system glucose-specific EIICBA component (678 aa).

In terms of domain architecture, PTS EIIC type-1 spans 3–414; sequence KKLFGQLQRI…FKYKTPGRED (412 aa). Transmembrane regions (helical) follow at residues 16 to 36, 63 to 83, 89 to 109, 126 to 146, 170 to 190, 211 to 231, 273 to 293, 303 to 323, 329 to 349, 355 to 375, and 382 to 402; these read LMLP…GTAM, AGGI…AIGL, VAAI…GAFL, VLGI…GALA, FVPI…AWIW, LAVF…LHHI, FMQG…LAIY, VVAG…ITEP, LFVA…SFLI, VHLG…GVLP, and LVIP…RFLI. The PTS EIIB type-1 domain occupies 425-506; sequence SELPFNVLKA…SLIMKGEITK (82 aa). Cys447 acts as the Phosphocysteine intermediate; for EIIB activity in catalysis. Positions 547–651 constitute a PTS EIIA type-1 domain; it reads DQVFAQKMMG…STVTPLIITN (105 aa). His599 acts as the Tele-phosphohistidine intermediate; for EIIA activity in catalysis.

Its subcellular location is the cell membrane. The enzyme catalyses N(pros)-phospho-L-histidyl-[protein] + D-glucose(out) = D-glucose 6-phosphate(in) + L-histidyl-[protein]. The phosphoenolpyruvate-dependent sugar phosphotransferase system (sugar PTS), a major carbohydrate active transport system, catalyzes the phosphorylation of incoming sugar substrates concomitantly with their translocation across the cell membrane. This system is involved in glucose transport. In Staphylococcus saprophyticus subsp. saprophyticus (strain ATCC 15305 / DSM 20229 / NCIMB 8711 / NCTC 7292 / S-41), this protein is PTS system glucose-specific EIICBA component (ptsG).